A 467-amino-acid polypeptide reads, in one-letter code: MPGVKKRKVAREAPAPAPAQESDVESSTPEQTQEPEAQEQEQEEGQSKTFKELGIIEQLCEACETMGYKAPTPIQRESIPLALKGRDLIGLAETGSGKTAAFALPILQALMEKPQPFFGLVLAPTRELAYQISKSFESLGASMGVRSCVIVGGMDMVSQSISLGKKPHIIVATPGRLLDHLENTKGFSLRNLKYLVMDEADRLLDMDFGPLLDKILKVLPRERRTFLFSATMSSKVESLQRASLSNPLRVSVSTSKYQTVSTLLQSYLFIPQKHKDLYLVYLLNEFAGQSTIIFTRTVNETQRLAFLLRALGFGAIPLHGQLSQSARLGALGKFRARSRNILVATDVAARGLDIPSVDVVLNFDLPGDSPSYVHRVGRTARAGKSGLAISFVAQYDVEVWLRIEGALGKKLKEYDCPKDEVMVLGENVAEAQRQAIMDMKDYNEKKGSRGKKFGGKRSRDEMDQEEG.

A disordered region spans residues M1–K48. Positions K48–R76 match the Q motif motif. In terms of domain architecture, Helicase ATP-binding spans I79–V250. A92–T99 contributes to the ATP binding site. A DEAD box motif is present at residues D198 to D201. In terms of domain architecture, Helicase C-terminal spans T262–M422. The segment at M439–G467 is disordered.

Belongs to the DEAD box helicase family. DDX47/RRP3 subfamily. As to quaternary structure, interacts with the SSU processome.

Its subcellular location is the nucleus. The catalysed reaction is ATP + H2O = ADP + phosphate + H(+). ATP-dependent rRNA helicase required for pre-ribosomal RNA processing. Involved in the maturation of the 35S-pre-rRNA and to its cleavage to mature 18S rRNA. In Aspergillus niger (strain ATCC MYA-4892 / CBS 513.88 / FGSC A1513), this protein is ATP-dependent rRNA helicase rrp3.